Reading from the N-terminus, the 571-residue chain is MANPKEKTPMCLVNELARFHSIQPQYKLLNESGPAHSKMFSVQLSLGEQTWESEGSSIKKAQQAVANKALTESTLPKPVQKPPKSNVNNNPGSITPTVELNGLAMKRGEPAIYRPLDPKPFPNYRANYNFRGMYNQRYHCPMPKIFYVQLTVGNNEFFGEGKTRQAARHNAAMKALQALQNEPIPEKSPQNGESGKEMDDDKDANKSEISLVFEIALKRNMPVSFEVIKESGPPHMKSFVTRVSVGEFSAEGEGNSKKLSKKRAATTVLQELKKLPPLPVIEKPKLFFKKRPKTIIKAGPEYGQGMNPISRLAQIQQARKEKEPDYVLLSERGMPRRREFVMQVKVGNEVATGTGPNKKIAKKNAAEAMLLQLGYKASTSLQDQLDKTGENKGWSGPKPGFPEPANNTPKGILHLSPDVYQEMEASRHRVTSGTTLGYLSPKDMNQPSSSFFSVESPSPTSSAPAARELLMNGTSPAAEAIGLKGSSPTPPCSSVQPSKQLEYLARIQGFQAALSALKQFSEQGLESIDGVVNVENGSLEKQAKHLREKADNNQANPGSITQDCKKSKSVI.

Positions 8–75 constitute a DRBM 1 domain; the sequence is TPMCLVNELA…ANKALTESTL (68 aa). A phosphoserine mark is found at Pro9 and Val13. Residue Arg18 is modified to Phosphothreonine. Ser21 is subject to Phosphoserine. Disordered regions lie at residues 71–94 and 178–203; these read TESTLPKPVQKPPKSNVNNNPGSI and ALQNEPIPEKSPQNGESGKEMDDDKD. A compositionally biased stretch (polar residues) spans 83–94; that stretch reads PKSNVNNNPGSI. Positions 95–181 constitute a DRBM 2 domain; that stretch reads TPTVELNGLA…AMKALQALQN (87 aa). Ser188 carries the phosphoserine modification. The segment covering 194-203 has biased composition (basic and acidic residues); the sequence is SGKEMDDDKD. DRBM domains are found at residues 207-274 and 307-375; these read SEIS…ELKK and NPIS…QLGY. 2 short sequence motifs (nuclear localization signal) span residues 273–317 and 373–412; these read KKLP…QIQQ and LGYKASTSLQDQLDKTGENKGWSGPKPGFPEPANNTPKGI. The required for dendritic transport stretch occupies residues 381–571; the sequence is LQDQLDKTGE…QDCKKSKSVI (191 aa). The disordered stretch occupies residues 382–413; the sequence is QDQLDKTGENKGWSGPKPGFPEPANNTPKGIL. Phosphoserine is present on residues Ser395, Ser416, Ser426, Ser440, Ser456, and Ser493. A disordered region spans residues 546–571; it reads LREKADNNQANPGSITQDCKKSKSVI. The segment covering 552–562 has biased composition (polar residues); sequence NNQANPGSITQ.

In terms of assembly, identified in a mRNP complex, at least composed of DHX9, DDX3X, ELAVL1, HNRNPU, IGF2BP1, ILF3, PABPC1, PCBP2, PTBP2, STAU1, STAU2, SYNCRIP and YBX1. Interacts with the exportin XPO5. This requires RNA and RAN bound to GTP. Interacts with microtubules. Isoform 2 and isoform 3 may also interact with ribosomes, and this association is independent of translation. Interacts with TRIM71 (via NHL repeats) in an RNA-dependent manner. Expressed in both somata and dendrites of hippocampal neurons.

The protein resides in the nucleus. It localises to the nucleolus. The protein localises to the cytoplasm. It is found in the endoplasmic reticulum. Functionally, RNA-binding protein required for the microtubule-dependent transport of neuronal RNA from the cell body to the dendrite. As protein synthesis occurs within the dendrite, the localization of specific mRNAs to dendrites may be a prerequisite for neurite outgrowth and plasticity at sites distant from the cell body. The sequence is that of Double-stranded RNA-binding protein Staufen homolog 2 (Stau2) from Rattus norvegicus (Rat).